Here is a 406-residue protein sequence, read N- to C-terminus: Arginine biosynthesis bifunctional protein ArgJ (406 aa).

T156, K182, T193, E279, N401, and T406 together coordinate substrate. T193 (nucleophile) is an active-site residue.

It belongs to the ArgJ family. As to quaternary structure, heterotetramer of two alpha and two beta chains.

It localises to the cytoplasm. It carries out the reaction N(2)-acetyl-L-ornithine + L-glutamate = N-acetyl-L-glutamate + L-ornithine. It catalyses the reaction L-glutamate + acetyl-CoA = N-acetyl-L-glutamate + CoA + H(+). It participates in amino-acid biosynthesis; L-arginine biosynthesis; L-ornithine and N-acetyl-L-glutamate from L-glutamate and N(2)-acetyl-L-ornithine (cyclic): step 1/1. Its pathway is amino-acid biosynthesis; L-arginine biosynthesis; N(2)-acetyl-L-ornithine from L-glutamate: step 1/4. Catalyzes two activities which are involved in the cyclic version of arginine biosynthesis: the synthesis of N-acetylglutamate from glutamate and acetyl-CoA as the acetyl donor, and of ornithine by transacetylation between N(2)-acetylornithine and glutamate. This is Arginine biosynthesis bifunctional protein ArgJ from Bacillus licheniformis (strain ATCC 14580 / DSM 13 / JCM 2505 / CCUG 7422 / NBRC 12200 / NCIMB 9375 / NCTC 10341 / NRRL NRS-1264 / Gibson 46).